The chain runs to 368 residues: Alanine racemase 3 (368 aa).

The Proton acceptor; specific for D-alanine role is filled by K42. The residue at position 42 (K42) is an N6-(pyridoxal phosphate)lysine. R141 is a substrate binding site. Residue Y262 is the Proton acceptor; specific for L-alanine of the active site. M310 provides a ligand contact to substrate.

Belongs to the alanine racemase family. The cofactor is pyridoxal 5'-phosphate.

The catalysed reaction is L-alanine = D-alanine. Its pathway is amino-acid biosynthesis; D-alanine biosynthesis; D-alanine from L-alanine: step 1/1. Its function is as follows. Catalyzes the interconversion of L-alanine and D-alanine. May also act on other amino acids. This Salmonella typhi protein is Alanine racemase 3 (alr3).